The following is a 409-amino-acid chain: Mitochondrial inner membrane protein oxa1-2 (409 aa).

A helical membrane pass occupies residues 76–96 (VVYTPSLPLSSSVLASFSFLP). Residues 97-114 (HNILQNGLNTLHIWSGLP) lie on the Mitochondrial intermembrane side of the membrane. A helical transmembrane segment spans residues 115–135 (WWASIAACAVAMRIAVFPIML). Residues 136-188 (KMMKTSAKLAIINPKVAEHMSVLSKAKAEGNSELMMQATTQIQNLYKVNNVNP) are Mitochondrial matrix-facing. The chain crosses the membrane as a helical span at residues 189–209 (LNLLSAPVFQGILFISFFYAL). Residues 210 to 235 (KTMAGVPVEGFTDGGFWWVNDLSQPD) lie on the Mitochondrial intermembrane side of the membrane. A helical transmembrane segment spans residues 236 to 256 (PLHIFPVANGLLMLLNIELGS). Over 257–275 (ETGSNKVAMSPSMKKFFRF) the chain is Mitochondrial matrix. A helical membrane pass occupies residues 276–296 (LCLASPLFTMNFPMAIFMYWF). The Mitochondrial intermembrane portion of the chain corresponds to 297-409 (PSNVFSVFQG…SVTKPTEKKD (113 aa)). The disordered stretch occupies residues 369 to 409 (TDTNNEQKPTNNSTITKATTLSDNSQNDKSSSVTKPTEKKD). Residues 374 to 403 (EQKPTNNSTITKATTLSDNSQNDKSSSVTK) are compositionally biased toward polar residues.

This sequence belongs to the OXA1/ALB3/YidC family.

Its subcellular location is the mitochondrion inner membrane. Required for the insertion of integral membrane proteins into the mitochondrial inner membrane. Essential for the activity and assembly of cytochrome c oxidase. It is essential for viability while oxa101 is not. When both are deleted the cell is non-viable, suggesting that oxa101 act as a back-up for oxa102. In Schizosaccharomyces pombe (strain 972 / ATCC 24843) (Fission yeast), this protein is Mitochondrial inner membrane protein oxa1-2 (oxa102).